The following is a 274-amino-acid chain: Ribosome biogenesis protein UTP30 (274 aa).

Belongs to the universal ribosomal protein uL1 family. Highly divergent. As to quaternary structure, component of the 90S pre-ribosomes. Interacts with FAF1.

It is found in the nucleus. The protein localises to the nucleolus. Its function is as follows. Involved in rRNA-processing and ribosome biosynthesis. In Saccharomyces cerevisiae (strain ATCC 204508 / S288c) (Baker's yeast), this protein is Ribosome biogenesis protein UTP30 (UTP30).